Consider the following 384-residue polypeptide: Guanine nucleotide-binding protein alpha-1 subunit (384 aa).

The N-myristoyl glycine moiety is linked to residue Gly-2. Cys-5 is lipidated: S-palmitoyl cysteine. A G-alpha domain is found at His-38 to Leu-384. A G1 motif region spans residues Lys-41–Thr-54. Positions 49, 50, 51, 52, 53, 54, 163, 188, 194, 222, 288, 289, 291, and 356 each coordinate GTP. Mg(2+) is bound at residue Ser-53. Residues Asp-186–Thr-194 form a G2 motif region. Position 194 (Thr-194) interacts with Mg(2+). A G3 motif region spans residues Tyr-215–Arg-224. Residues Met-284–Asp-291 are G4 motif. The G5 motif stretch occupies residues Thr-354–Gln-359.

The protein belongs to the G-alpha family. As to quaternary structure, g proteins are composed of 3 units; alpha, beta and gamma. The alpha chain contains the guanine nucleotide binding site. It depends on Mg(2+) as a cofactor.

Its function is as follows. Guanine nucleotide-binding proteins (G proteins) are involved as modulators or transducers in various transmembrane signaling systems. The chain is Guanine nucleotide-binding protein alpha-1 subunit (GPA1) from Pisum sativum (Garden pea).